A 266-amino-acid polypeptide reads, in one-letter code: Biotin--[acetyl-CoA-carboxylase] ligase (266 aa).

The region spanning 14–202 (RSLRDQLIGA…ELEARIIQWR (189 aa)) is the BPL/LPL catalytic domain. Biotin contacts are provided by residues 38-39 (ST), Q63, R67, and K138.

This sequence belongs to the biotin--protein ligase family. As to quaternary structure, monomer in solution. Forms dimers under specific crystallization conditions.

It catalyses the reaction biotin + L-lysyl-[protein] + ATP = N(6)-biotinyl-L-lysyl-[protein] + AMP + diphosphate + H(+). The catalysed reaction is biotin + ATP + H(+) = biotinyl-5'-AMP + diphosphate. The enzyme catalyses biotinyl-5'-AMP + L-lysyl-[protein] = N(6)-biotinyl-L-lysyl-[protein] + AMP + 2 H(+). With respect to regulation, binding of biotin and ATP significantly increases the thermal stability of BirA and leads to the formation of a high affinity holoenzyme complex. Functionally, catalyzes the transfer of biotin onto a conserved lysine residue of the biotin carboxyl carrier protein (BCCP) domain of acetyl-CoA carboxylase and converts it to active holo-BCCP. Forms an acyl-adenylate intermediate. Cannot use GTP or desthiobiotin. This Mycobacterium tuberculosis (strain ATCC 25618 / H37Rv) protein is Biotin--[acetyl-CoA-carboxylase] ligase.